We begin with the raw amino-acid sequence, 754 residues long: MEINPYLMFLNNDVTSLISTTYPYTGPPPMSHGSSTKYTLETIKRTYDYSRTSVEKTSKVFNIPRRKFCNCLEDKDELVKPTGNVDISSLLGLAEMMEKRMGEGFFKHCVMEAETEILKMHFSRLTEGRQTYDWTSERNMPAATALQLTVDAIKETEGPFKGTTMLEYCNKMIEMLDWKEVKFRKVKTMVRREKDKRSGKEIKTKVPVMGIDSIKHDEFLIRALTINTMAKDGERGKLQRRAIATPGMIVRPFSKIVETVAQKICEKLKESGLPVGGNEKKAKLKTTVTSLNARMNSDQFAVNITGDNSKWNECQQPEAYLALLAYITKDSSDLMKDLCSVAPVLFCNKFVKLGQGIRLSNKRKTKEVIIKAEKMGKYKNLMREEYKNLFEPLEKYIQKDVCFLPGGMLMGMFNMLSTVLGVSTLCYMDEELKAKGCFWTGLQSSDDFVLFAVASNWSNIHWTIRRFNAVCKLIGINMSLEKSYGSLPELFEFTSMFFDGEFVSNLAMELPAFTTAGVNEGVDFTAAMSIIKTNMINNSLSPSTALMALRICLQEFRATYRVHPWDSRVKGGRMKIINEFIKTIENKDGLLIADGGKLMNNISTLHIPEEVLKFEKMDEQYRNRVFNPKNPFTNFDKTIDIFRAHGPIRVEENEAVVSTHSFRTRANRTLLNTDMRAMMAEEKRYQMVCDMFKSVFESADINPPIGAMSIGEAIEEKLLERAKMKRDIGAIEDSEYEEIKDIIRDAKKARIESR.

2 consecutive short sequence motifs (nuclear localization signal) follow at residues 189–197 (MVRREKDKR) and 205–218 (KVPV…KHDE). Positions 251 to 258 (RPFSKIVE) are promoter-binding site. The RdRp catalytic domain maps to 288 to 484 (VTSLNARMNS…GINMSLEKSY (197 aa)).

Belongs to the influenza viruses polymerase PB1 family. As to quaternary structure, influenza RNA polymerase is composed of three subunits: PB1, PB2 and PA. Interacts (via N-terminus) with PA (via C-terminus). Interacts (via C-terminus) with PB2 (via N-terminus); this interaction is essential for transcription initiation. In terms of processing, phosphorylated by host PRKCA.

The protein resides in the host nucleus. It is found in the host cytoplasm. The catalysed reaction is RNA(n) + a ribonucleoside 5'-triphosphate = RNA(n+1) + diphosphate. Functionally, RNA-dependent RNA polymerase which is responsible for replication and transcription of virus RNA segments. The transcription of viral mRNAs occurs by a unique mechanism called cap-snatching. 5' methylated caps of cellular mRNAs are cleaved after 10-13 nucleotides by PA. In turn, these short capped RNAs are used as primers by PB1 for transcription of viral mRNAs. During virus replication, PB1 initiates RNA synthesis and copy vRNA into complementary RNA (cRNA) which in turn serves as a template for the production of more vRNAs. This is RNA-directed RNA polymerase catalytic subunit from Influenza C virus (strain C/Ann Arbor/1/1950).